The primary structure comprises 222 residues: Elongation factor 1-beta' (222 aa).

Residues serine 71–glutamate 113 are disordered. Positions threonine 78–alanine 89 are enriched in low complexity. Over residues aspartate 92–glutamate 111 the composition is skewed to acidic residues.

It belongs to the EF-1-beta/EF-1-delta family. As to quaternary structure, EF-1 is composed of 4 subunits: alpha, beta, beta' and gamma. In terms of processing, phosphorylated.

In terms of biological role, EF-1-beta and EF-1-beta' stimulate the exchange of GDP bound to EF-1-alpha to GTP. The sequence is that of Elongation factor 1-beta' from Bombyx mori (Silk moth).